A 161-amino-acid polypeptide reads, in one-letter code: Phosphopantetheine adenylyltransferase (161 aa).

Serine 8 is a substrate binding site. Residues serine 8 to phenylalanine 9 and histidine 16 contribute to the ATP site. Substrate-binding residues include lysine 40, leucine 72, and arginine 86. ATP-binding positions include glycine 87 to arginine 89, glutamate 97, and phenylalanine 122 to serine 128.

It belongs to the bacterial CoaD family. Homohexamer. The cofactor is Mg(2+).

The protein localises to the cytoplasm. It carries out the reaction (R)-4'-phosphopantetheine + ATP + H(+) = 3'-dephospho-CoA + diphosphate. It functions in the pathway cofactor biosynthesis; coenzyme A biosynthesis; CoA from (R)-pantothenate: step 4/5. Functionally, reversibly transfers an adenylyl group from ATP to 4'-phosphopantetheine, yielding dephospho-CoA (dPCoA) and pyrophosphate. The chain is Phosphopantetheine adenylyltransferase from Thermotoga neapolitana (strain ATCC 49049 / DSM 4359 / NBRC 107923 / NS-E).